A 910-amino-acid polypeptide reads, in one-letter code: Eukaryotic translation initiation factor 3 subunit C (910 aa).

Positions 1–21 (MSRFFANGSDSESESSEDEIQ) are disordered. The span at 11–20 (SESESSEDEI) shows a compositional bias: acidic residues. Serine 34, serine 165, serine 176, and serine 185 each carry phosphoserine. The disordered stretch occupies residues 157–281 (FREAPDQESE…KRAEDDEDGE (125 aa)). Residues 162 to 186 (DQESEAEDEVVAQESDGGDAGDDSD) are compositionally biased toward acidic residues. Residues 193-207 (EAAPKAVKSAPAKAA) are compositionally biased toward low complexity. Acidic residues predominate over residues 209 to 235 (ADDDDSDDSIDWDSDSESETESSDDEN). Residues 240-268 (MRERFLKRTTEKEEKDDDKRKDKRKEQKV) are compositionally biased toward basic and acidic residues. Residues 639–815 (FHMHINLELL…ETVVMHRSEP (177 aa)) enclose the PCI domain. A disordered region spans residues 847 to 910 (FFQRGNMGNR…QQQVQTIDEE (64 aa)). Residues 862 to 874 (NRNQNNQGGNWLG) are compositionally biased toward low complexity. Positions 882-891 (RNRNQRGHHK) are enriched in basic residues. Positions 895-910 (DRQQQQQQQVQTIDEE) are enriched in low complexity.

It belongs to the eIF-3 subunit C family. Component of the eukaryotic translation initiation factor 3 (eIF-3) complex. The eIF-3 complex interacts with pix.

The protein localises to the cytoplasm. Component of the eukaryotic translation initiation factor 3 (eIF-3) complex, which is involved in protein synthesis of a specialized repertoire of mRNAs and, together with other initiation factors, stimulates binding of mRNA and methionyl-tRNAi to the 40S ribosome. The eIF-3 complex specifically targets and initiates translation of a subset of mRNAs involved in cell proliferation. The protein is Eukaryotic translation initiation factor 3 subunit C of Drosophila yakuba (Fruit fly).